The chain runs to 245 residues: 1-(5-phosphoribosyl)-5-[(5-phosphoribosylamino)methylideneamino] imidazole-4-carboxamide isomerase (245 aa).

Residue Asp-8 is the Proton acceptor of the active site. Residue Asp-131 is the Proton donor of the active site.

Belongs to the HisA/HisF family.

It localises to the cytoplasm. It catalyses the reaction 1-(5-phospho-beta-D-ribosyl)-5-[(5-phospho-beta-D-ribosylamino)methylideneamino]imidazole-4-carboxamide = 5-[(5-phospho-1-deoxy-D-ribulos-1-ylimino)methylamino]-1-(5-phospho-beta-D-ribosyl)imidazole-4-carboxamide. The protein operates within amino-acid biosynthesis; L-histidine biosynthesis; L-histidine from 5-phospho-alpha-D-ribose 1-diphosphate: step 4/9. The chain is 1-(5-phosphoribosyl)-5-[(5-phosphoribosylamino)methylideneamino] imidazole-4-carboxamide isomerase from Neisseria meningitidis serogroup C (strain 053442).